The primary structure comprises 67 residues: Large ribosomal subunit protein uL29 (67 aa).

The protein belongs to the universal ribosomal protein uL29 family.

The polypeptide is Large ribosomal subunit protein uL29 (Acetivibrio thermocellus (strain ATCC 27405 / DSM 1237 / JCM 9322 / NBRC 103400 / NCIMB 10682 / NRRL B-4536 / VPI 7372) (Clostridium thermocellum)).